The chain runs to 111 residues: uncharacterized protein (111 aa).

Transmembrane regions (helical) follow at residues 45 to 65 (AFLI…LLVI) and 91 to 111 (LPAG…ILHI).

The protein localises to the cell membrane. This is an uncharacterized protein from Methanothermobacter thermautotrophicus (strain ATCC 29096 / DSM 1053 / JCM 10044 / NBRC 100330 / Delta H) (Methanobacterium thermoautotrophicum).